The primary structure comprises 208 residues: Small ribosomal subunit protein uS4 (208 aa).

One can recognise an S4 RNA-binding domain in the interval 99-165; that stretch reads RRLDNVVFQL…PRLKEILSSL (67 aa).

The protein belongs to the universal ribosomal protein uS4 family. As to quaternary structure, part of the 30S ribosomal subunit. Contacts protein S5. The interaction surface between S4 and S5 is involved in control of translational fidelity.

In terms of biological role, one of the primary rRNA binding proteins, it binds directly to 16S rRNA where it nucleates assembly of the body of the 30S subunit. With S5 and S12 plays an important role in translational accuracy. This is Small ribosomal subunit protein uS4 from Desulfitobacterium hafniense (strain Y51).